The primary structure comprises 193 residues: Large ribosomal subunit protein bL25 (193 aa).

It belongs to the bacterial ribosomal protein bL25 family. CTC subfamily. As to quaternary structure, part of the 50S ribosomal subunit; part of the 5S rRNA/L5/L18/L25 subcomplex. Contacts the 5S rRNA. Binds to the 5S rRNA independently of L5 and L18.

Functionally, this is one of the proteins that binds to the 5S RNA in the ribosome where it forms part of the central protuberance. The chain is Large ribosomal subunit protein bL25 from Lachnoclostridium phytofermentans (strain ATCC 700394 / DSM 18823 / ISDg) (Clostridium phytofermentans).